A 264-amino-acid polypeptide reads, in one-letter code: 3-methyl-2-oxobutanoate hydroxymethyltransferase (264 aa).

Residues aspartate 45 and aspartate 84 each contribute to the Mg(2+) site. 3-methyl-2-oxobutanoate contacts are provided by residues 45–46 (DS), aspartate 84, and lysine 112. Mg(2+) is bound at residue glutamate 114. The Proton acceptor role is filled by glutamate 181.

It belongs to the PanB family. Homodecamer; pentamer of dimers. It depends on Mg(2+) as a cofactor.

The protein resides in the cytoplasm. It carries out the reaction 3-methyl-2-oxobutanoate + (6R)-5,10-methylene-5,6,7,8-tetrahydrofolate + H2O = 2-dehydropantoate + (6S)-5,6,7,8-tetrahydrofolate. The protein operates within cofactor biosynthesis; (R)-pantothenate biosynthesis; (R)-pantoate from 3-methyl-2-oxobutanoate: step 1/2. Catalyzes the reversible reaction in which hydroxymethyl group from 5,10-methylenetetrahydrofolate is transferred onto alpha-ketoisovalerate to form ketopantoate. The sequence is that of 3-methyl-2-oxobutanoate hydroxymethyltransferase from Alteromonas mediterranea (strain DSM 17117 / CIP 110805 / LMG 28347 / Deep ecotype).